The primary structure comprises 116 residues: Large ribosomal subunit protein uL22 (116 aa).

The protein belongs to the universal ribosomal protein uL22 family. In terms of assembly, part of the 50S ribosomal subunit.

Its function is as follows. This protein binds specifically to 23S rRNA; its binding is stimulated by other ribosomal proteins, e.g. L4, L17, and L20. It is important during the early stages of 50S assembly. It makes multiple contacts with different domains of the 23S rRNA in the assembled 50S subunit and ribosome. The globular domain of the protein is located near the polypeptide exit tunnel on the outside of the subunit, while an extended beta-hairpin is found that lines the wall of the exit tunnel in the center of the 70S ribosome. The sequence is that of Large ribosomal subunit protein uL22 from Sulfurihydrogenibium sp. (strain YO3AOP1).